The chain runs to 389 residues: Na(+)/H(+) antiporter NhaA (389 aa).

The next 11 helical transmembrane spans lie at 17 to 37, 59 to 79, 95 to 115, 124 to 144, 154 to 174, 177 to 197, 213 to 233, 261 to 281, 287 to 307, 328 to 348, and 363 to 383; these read ILLL…LAGL, LLLW…GLEV, SLPT…YLLF, VGWA…MALL, VFLL…IALF, SDLS…LVAL, LVLW…GVII, FLIL…NMSL, PVPV…VMLF, IAPV…IASL, and LGTL…LSKV.

The protein belongs to the NhaA Na(+)/H(+) (TC 2.A.33) antiporter family.

The protein resides in the cell inner membrane. It carries out the reaction Na(+)(in) + 2 H(+)(out) = Na(+)(out) + 2 H(+)(in). Na(+)/H(+) antiporter that extrudes sodium in exchange for external protons. The sequence is that of Na(+)/H(+) antiporter NhaA from Shewanella sp. (strain ANA-3).